We begin with the raw amino-acid sequence, 176 residues long: RING-H2 finger protein ATL14 (176 aa).

A disordered region spans residues 1–26 (MSITIPYDGSISREPSPSPPPPKANT). Residues 37–57 (FLIGLIMIPVAITAFIFILTS) form a helical membrane-spanning segment. An RING-type; atypical zinc finger spans residues 115–157 (CVVCIDGFRQGQWCRKLPRCGHVFHRKCVDLWLIKVSTCPICR).

Belongs to the RING-type zinc finger family. ATL subfamily.

The protein resides in the membrane. The catalysed reaction is S-ubiquitinyl-[E2 ubiquitin-conjugating enzyme]-L-cysteine + [acceptor protein]-L-lysine = [E2 ubiquitin-conjugating enzyme]-L-cysteine + N(6)-ubiquitinyl-[acceptor protein]-L-lysine.. The protein operates within protein modification; protein ubiquitination. The sequence is that of RING-H2 finger protein ATL14 (ATL14) from Arabidopsis thaliana (Mouse-ear cress).